A 503-amino-acid polypeptide reads, in one-letter code: Cytochrome P450 7A1 (503 aa).

A helical membrane pass occupies residues 4–24; it reads ISLIWGIAVLVSCCIWFIVGI. Cys-444 is a heme binding site.

The protein belongs to the cytochrome P450 family. The cofactor is heme. As to expression, detected in liver (at protein level). Liver.

The protein localises to the endoplasmic reticulum membrane. Its subcellular location is the microsome membrane. The enzyme catalyses cholesterol + reduced [NADPH--hemoprotein reductase] + O2 = 7alpha-hydroxycholesterol + oxidized [NADPH--hemoprotein reductase] + H2O + H(+). It catalyses the reaction 4beta-hydroxycholesterol + reduced [NADPH--hemoprotein reductase] + O2 = 4beta,7alpha-dihydroxycholesterol + oxidized [NADPH--hemoprotein reductase] + H2O + H(+). The catalysed reaction is lathosterol + reduced [NADPH--hemoprotein reductase] + O2 = 7alpha,8alpha-epoxy-5alpha-cholestan-3beta-ol + oxidized [NADPH--hemoprotein reductase] + H2O + H(+). It carries out the reaction lathosterol + reduced [NADPH--hemoprotein reductase] + O2 = 5alpha-cholestan-7-oxo-3beta-ol + oxidized [NADPH--hemoprotein reductase] + H2O + H(+). The enzyme catalyses 7-dehydrocholesterol + reduced [NADPH--hemoprotein reductase] + O2 = 7-oxocholesterol + oxidized [NADPH--hemoprotein reductase] + H2O + H(+). It catalyses the reaction (24S)-hydroxycholesterol + reduced [NADPH--hemoprotein reductase] + O2 = (24S)-7alpha-dihydroxycholesterol + oxidized [NADPH--hemoprotein reductase] + H2O + H(+). The catalysed reaction is (24R)-hydroxycholesterol + reduced [NADPH--hemoprotein reductase] + O2 = (24R)-7alpha-dihydroxycholesterol + oxidized [NADPH--hemoprotein reductase] + H2O + H(+). It participates in lipid metabolism; bile acid biosynthesis. The protein operates within steroid metabolism; cholesterol degradation. Its function is as follows. A cytochrome P450 monooxygenase involved in the metabolism of endogenous cholesterol and its oxygenated derivatives (oxysterols). Mechanistically, uses molecular oxygen inserting one oxygen atom into a substrate, and reducing the second into a water molecule, with two electrons provided by NADPH via cytochrome P450 reductase (CPR; NADPH-ferrihemoprotein reductase). Functions as a critical regulatory enzyme of bile acid biosynthesis and cholesterol homeostasis. Catalyzes the hydroxylation of carbon hydrogen bond at 7-alpha position of cholesterol, a rate-limiting step in cholesterol catabolism and bile acid biosynthesis. 7-alpha hydroxylates several oxysterols, including 4beta-hydroxycholesterol and 24-hydroxycholesterol. Catalyzes the oxidation of the 7,8 double bond of 7-dehydrocholesterol and lathosterol with direct and predominant formation of the 7-keto derivatives. The chain is Cytochrome P450 7A1 (Cyp7a1) from Rattus norvegicus (Rat).